The chain runs to 977 residues: Synaptonemal complex protein 2-like (977 aa).

Disordered stretches follow at residues 447 to 474 (LGSQ…LSNA), 574 to 593 (QSTE…NSPL), 642 to 728 (RNKS…QDIM), and 804 to 824 (TEKN…VFYS). Residues 449–462 (SQTSEHSSTTKTSS) show a composition bias toward low complexity. The segment covering 463-474 (ANRSVQKSLSNA) has biased composition (polar residues). Over residues 674-693 (SRKEMHRPEDINPKSPHSAE) the composition is skewed to basic and acidic residues.

This sequence belongs to the SYCP2 family. Ubiquitinated and gradually degraded by the proteasome during oocyte maturation. Post-translationally, phosphorylated in maturing oocytes, before its degradation. As to expression, expressed in immature oocytes (at protein level). Expressed in the ovary.

The protein localises to the nucleus. The protein resides in the chromosome. It localises to the centromere. It is found in the nucleolus. Oocyte-specific protein that localizes to centromeres at the dictyate stage and regulates the survival of primordial oocytes. The sequence is that of Synaptonemal complex protein 2-like (sycp2l) from Xenopus laevis (African clawed frog).